The primary structure comprises 303 residues: MATH domain and coiled-coil domain-containing protein At3g58250 (303 aa).

The region spanning 8–135 (KKKFSWVIKN…KGELKIVVEI (128 aa)) is the MATH domain. Positions 231 to 287 (KLDWLKKKLDQVTQKKEKEAAGETRMHEIGEELKDLKLKCSDLEAQLDKEKADVLAA) form a coiled coil.

In Arabidopsis thaliana (Mouse-ear cress), this protein is MATH domain and coiled-coil domain-containing protein At3g58250.